Reading from the N-terminus, the 2565-residue chain is MTRKFVKRSIFLHLLRHQPANAQIGLMEGNTFCTTLQPRLFTMDLNVVEHKVFYTELLNLCEAEDSALTKLPCYKSLPSLVPLRIAALNALAACNYLPQSREKIIAALFKALNSTNSELQEAGEACMRKFLEGATIEVDQIHTHMRPLLMMLGDYRSLTLNVVNRLTSVTRLFPNSFNDKFCDQMMQHLRKWMEVVVITHKGGQRSDGNEMKICSAIINLFHLIPAAPQTLVKPPLEVVMETERAMLIEAGSPFREPLIKFLTRHPSQTVELFMMGATLNDPQWSRMFMSFLKHKDARPLRDVLAANPNRFITLLLPGGAQTAVRPGSSSTSNMRLDLQFQAIKIISIIVKNDDAWLASQHSLVSQLRRVWVSETFQERHRKENMAATNWKEPKLLAFCLLNYCKRNYGDIELLFQLLRAFTGRFLCNMTFLKEYMEEEIPKNYSIAQKRALFFRFVEFNDPNFGDELKAKVLQHILNPAFLYSFEKGEGEQLLGPPNPEGDNPESITSVFITKVLDPEKQADMLDSLRIYLLQYATLLVEHAPHHIHDNNKNRNSKLRRLMTFAWPCLLSKACVDPACRYSGHLLLAHIIAKFAIHKKIVLQVFHSLLKAHAMEARAIVRQAMAILTPAVPARMEDGHQMLTHWTRKIIVEEGHTVPQLVHILHPIVQHFKVYYPVRHHLVQHMVSAMQRLGFTPSVTIEQRRLAVDLSEVVIKWELQRIKDQQPDSDMDPNSSGEGVNSVSIKRGLSVDSAQEVKRFRAATGAISAVFGRSQSLPGADSLLAKPIDKQHTDTVVNFLIRVACQVNDNTNTAGSPGEVLSRRCVNLLKTALRPDMWCKSELKLQWFDKLLMTVEQPNQVNYGNICTGLEVLNFLLTVLQSPAILSSFKPLQRGIAACMTCGNTKVLRAVHSLLSRLMSIFPTEPSTSSVASKYEELECLYAAVGKVIYEGLTNYEKATSANPSQLFGTLMIHKSACCNNPSYIDRLISVFMRSLQKMVREHLNPQTASGSTEATAAGTSELVMLSLDLVKTRLAVMSMEMRKNFIQTILTSLIEKSPDAKILRAVVKIVEEWVKNNSPMAANQTPTLREKSILLVKMMTYIEKRFPEDLELNAQFLDLVNYVYRDEALSGSELTAKLEPAFLSGLRCAQPLIRAKFFEVFDNSMKRRVYERLLYVTCSQNWEAMGSHFWIKQCIELLLAVCEKSTAIGTSCQGAMLPSITNVINLADSHDRAAFAMVTHVKQEPRERENSESKEEDVEIDIELAPGDQTSTPKTKELSEKDIGNQLHMLTNRHDKFLDTLREVKTGALLSAFVQLCHISTTLAEKTWVQLFPRLWKILSDRQQHALAGEISPFLCSGSHQVQRDCQPSALNCFVEAMSQCVPPIPMRPCVLKYLGKTHNLWFRSTLMLEHQAFEKGLSLPIKPKQTTEFYEQESITPPQQEILDSLAELYSLLQEEDMWAGLWQKRCKFSETATAIAYEQHGFFEQAQESYEKAMDKAKKEHERSNASPAIFPEYQLWEDHWIRCSKELNQWEALTEFGQSKGHINPYLVLECAWRVSNWTAMKEALVQVEVSCPKEMAWKVNMYRGYLAICHPEEQQLSFIERLVEMASSLAIREWRRLPHVVSHVHTPLLQAAQQIIELQEAAQINAGLQPTNLGRNNSLHDMKTVVKTWRNRLPIVSDDLSHWSSVFMWRQHHYQAIVTAYENSSHHDPSSNNAMLGVHASASAIIQYGKIARKQGLVNVALDILSRIHTIPTVPIVDCFQKIRQQVKCYLQLAGVMGKNECMQGLEVIESTNLKYFTKEMTAEFYALKGMFLAQINKSEEANKAFSAAVQMHDVLVKAWAMWGDYLESIFVKERQLHLGVSAITCYLHACRHQNESKSRKYLAKVLWLLSFDDDKNTLADAVDKYCIGVPPIQWLAWIPQLLTCLVGSEGKLLLNLISQVGRVYPQAVYFPIRTLYLTLKIEQRERYKSDSGQQQPSSAGNQSHSASDPGPIRATAPMWRCSRIMHMQRELHPTLLSSLEGIVDQMVWFRENWHEEVLRQLQQGLAKCYSVAFEKSGAVSDAKITPHTLNFVKKLVSTFGVGLENVSNVSTMFSSAASESLARRAQATAQDPVFQKLKGQFTTDFDFSVPGSMKLHNLISKLKKWIKILEAKTKQLPKFFLIEEKCRFLSNFSAQTAEVEIPGEFLMPKPTHYYIKIARFMPRVEIVQKHNTAARRLHIRGHNGKIYPYLVMNDACLTESRREERVLQLLRLLNPCLEKRKETTKRHLFFTVPRVVAVSPQMRLVEDNPSSLSLVEIYKQRCAKKGIEHDNPISRYYDRLATVQARGTQASHQVLRDILKEVQSNMVPRSMLKEWALHTFPNATDYWTFRKMFTIQLALIGFAEFVLHLNRLNPEMLQIAQDTGKLNVAYFRFDINDATGDLDANRPVPFRLTPNISEFLTTIGVSGPLTASMIAVARCFAQPNFKVDGVLKTVLRDEIIAWHKKTQEDTSSPLSAAGQPENMDSQQLVSLVQKAVTAIMTRLHNLAQFDGGESKVNTLVAAANSLDNLCRMDPAWHPWL.

Phosphoserine is present on residues Ser-328, Ser-749, and Ser-775. Positions 710–1087 (SEVVIKWELQ…SPMAANQTPT (378 aa)) are interaction with TP53. A Bipartite nuclear localization signal motif is present at residues 745-760 (KRGLSVDSAQEVKRFR). Residue Lys-1242 forms a Glycyl lysine isopeptide (Lys-Gly) (interchain with G-Cter in SUMO2) linkage. Residues 1242–1253 (KQEPRERENSES) show a composition bias toward basic and acidic residues. The tract at residues 1242–1277 (KQEPRERENSESKEEDVEIDIELAPGDQTSTPKTKE) is disordered. The FAT domain maps to 1391 to 1963 (VLKYLGKTHN…YFPIRTLYLT (573 aa)). Residue Lys-1766 is modified to N6-acetyllysine. Positions 1973-1995 (KSDSGQQQPSSAGNQSHSASDPG) are disordered. Polar residues predominate over residues 1975 to 1991 (DSGQQQPSSAGNQSHSA). The PI3K/PI4K catalytic domain occupies 2206-2529 (MPRVEIVQKH…AVTAIMTRLH (324 aa)). Residues 2212–2218 (VQKHNTA) form a G-loop region. The segment at 2393 to 2401 (HLNRLNPEM) is catalytic loop. Positions 2413–2438 (VAYFRFDINDATGDLDANRPVPFRLT) are activation loop. An FATC domain is found at 2533–2565 (QFDGGESKVNTLVAAANSLDNLCRMDPAWHPWL).

This sequence belongs to the PI3/PI4-kinase family. TRA1 subfamily. In terms of assembly, interacts with MYC, E2F1 and E2F4 transcription factors. Interacts directly with p53/TP53. Interacts with GCN5L2. Component of various HAT complexes. Component of the PCAF complex, at least composed of TADA2L/ADA2, SUPT3H, TADA3L/ADA3, TAF5L/PAF65-beta, TAF6L/PAF65-alpha, TAF10/TAFII30, TAF12/TAFII20, TAF9/TAFII31 and TRRAP. Component of the TFTC-HAT complex, at least composed of TAF5L, TAF6L, TADA3L, SUPT3H/SPT3, TAF2/TAFII150, TAF4/TAFII135, TAF5/TAFII100, GCN5L2/GCN5, TAF10 and TRRAP. Component of the NuA4 histone acetyltransferase complex which contains the catalytic subunit KAT5/TIP60 and the subunits EP400, TRRAP/PAF400, BRD8/SMAP, EPC1, DMAP1/DNMAP1, RUVBL1/TIP49, RUVBL2, ING3, actin, ACTL6A/BAF53A, MORF4L1/MRG15, MORF4L2/MRGX, MRGBP, YEATS4/GAS41, VPS72/YL1 and MEAF6. Component of the STAGA complex, at least composed of SUPT3H, GCN5L2, SUPT7L, TAF5L, TAF6L, TADA3L, TAD1L, TAF10, TAF12, TRRAP and TAF9. The STAGA core complex is associated with a subcomplex required for histone deubiquitination composed of ATXN7L3, ENY2 and USP22. Component of the BAF53 complex, at least composed of BAF53A, RUVBL1, SMARCA4/BRG1, and TRRAP, which preferentially acetylates histone H4 (and H2A) within nucleosomes. Interacts with NPAT. Interaction with TELO2 and TTI1. Component of a SWR1-like complex. As to expression, expressed in the cochlea.

The protein localises to the nucleus. Functionally, adapter protein, which is found in various multiprotein chromatin complexes with histone acetyltransferase activity (HAT), which gives a specific tag for epigenetic transcription activation. Component of the NuA4 histone acetyltransferase complex which is responsible for acetylation of nucleosomal histones H4 and H2A. Plays a central role in MYC transcription activation, and also participates in cell transformation by MYC. Required for p53/TP53-, E2F1- and E2F4-mediated transcription activation. Probably acts by linking transcription factors such as E1A, MYC or E2F1 to HAT complexes such as STAGA thereby allowing transcription activation. Probably not required in the steps following histone acetylation in processes of transcription activation. May be required for the mitotic checkpoint and normal cell cycle progression. Component of a SWR1-like complex that specifically mediates the removal of histone H2A.Z/H2AZ1 from the nucleosome. May play a role in the formation and maintenance of the auditory system. The polypeptide is Transformation/transcription domain-associated protein (Trrap) (Mus musculus (Mouse)).